The following is a 292-amino-acid chain: High-affinity heme uptake system protein IsdE (292 aa).

Residues 1–19 (MRIIKYLTILVISVVILTS) form the signal peptide. Residue Cys20 is the site of N-palmitoyl cysteine attachment. A lipid anchor (S-diacylglycerol cysteine) is attached at Cys20. Residues 35 to 291 (RIVPTTVALT…QLYDLFYKDK (257 aa)) enclose the Fe/B12 periplasmic-binding domain. Val41, Ala42, Ser60, Tyr61, Met78, and His229 together coordinate heme.

Belongs to the bacterial solute-binding protein 8 family. It depends on heme b as a cofactor.

Its subcellular location is the cell membrane. In terms of biological role, involved in heme (porphyrin) scavenging. Binds Fe(2+) and Fe(3+) heme but the largest fraction is Fe(2+) heme. Functions as a high-affinity heme binding protein and probably has a role in relaying heme-iron from cell wall-anchored isd proteins receptors to the probable permease IsdF. This Staphylococcus aureus (strain Mu3 / ATCC 700698) protein is High-affinity heme uptake system protein IsdE (isdE).